A 329-amino-acid chain; its full sequence is Anthranilate phosphoribosyltransferase (329 aa).

Residues Gly78, 81–82, 88–91, 106–114, and Ser118 each bind 5-phospho-alpha-D-ribose 1-diphosphate; these read GD, NLST, and KHGNRAASS. Gly78 contributes to the anthranilate binding site. Ser90 is a binding site for Mg(2+). Residue Asn109 coordinates anthranilate. Arg164 is an anthranilate binding site. 2 residues coordinate Mg(2+): Asp221 and Glu222.

Belongs to the anthranilate phosphoribosyltransferase family. In terms of assembly, homodimer. The cofactor is Mg(2+).

It catalyses the reaction N-(5-phospho-beta-D-ribosyl)anthranilate + diphosphate = 5-phospho-alpha-D-ribose 1-diphosphate + anthranilate. It participates in amino-acid biosynthesis; L-tryptophan biosynthesis; L-tryptophan from chorismate: step 2/5. Catalyzes the transfer of the phosphoribosyl group of 5-phosphorylribose-1-pyrophosphate (PRPP) to anthranilate to yield N-(5'-phosphoribosyl)-anthranilate (PRA). The sequence is that of Anthranilate phosphoribosyltransferase from Thermus thermophilus (strain ATCC BAA-163 / DSM 7039 / HB27).